The following is a 290-amino-acid chain: ATP synthase gamma chain (290 aa).

This sequence belongs to the ATPase gamma chain family. As to quaternary structure, F-type ATPases have 2 components, CF(1) - the catalytic core - and CF(0) - the membrane proton channel. CF(1) has five subunits: alpha(3), beta(3), gamma(1), delta(1), epsilon(1). CF(0) has four main subunits: a, b, b' and c.

The protein localises to the cellular chromatophore membrane. Functionally, produces ATP from ADP in the presence of a proton gradient across the membrane. The gamma chain is believed to be important in regulating ATPase activity and the flow of protons through the CF(0) complex. The protein is ATP synthase gamma chain of Rhodobacter capsulatus (Rhodopseudomonas capsulata).